Consider the following 478-residue polypeptide: Keratin, type II cytoskeletal 8 (478 aa).

The tract at residues 1–97 (MSIRVTQKSY…DPNIQAVRTQ (97 aa)) is head. Position 9 is a phosphoserine; by PKC/PRKCE (S9). A Glycyl lysine isopeptide (Lys-Gly) (interchain with G-Cter in SUMO2) cross-link involves residue K11. Phosphoserine is present on residues S13, S15, S21, and S22. Residues 16–44 (APRSFSSRSYTSGPGSRISSSAFSRVGSS) are disordered. Omega-N-methylarginine is present on R23. A Phosphoserine; by PKC/PRKCE modification is found at S24. T26 carries the post-translational modification Phosphothreonine. S27 and S31 each carry phosphoserine. The residue at position 32 (R32) is an Omega-N-methylarginine. A phosphoserine mark is found at S34 and S39. R40 is modified (omega-N-methylarginine). Residues S43 and S44 each carry the phosphoserine modification. An Asymmetric dimethylarginine; alternate modification is found at R48. R48 carries the post-translational modification Omega-N-methylarginine; alternate. S81 bears the Phosphoserine; by MAPK mark. Residues 98 to 133 (EKEQIKTLNNKFASFIDKVRHLEQQNKVLETKWNLL) form a coil 1A region. In terms of domain architecture, IF rod spans 98–409 (EKEQIKTLNN…KLLEGEESRL (312 aa)). N6-malonyllysine is present on K108. Glycyl lysine isopeptide (Lys-Gly) (interchain with G-Cter in SUMO2) cross-links involve residues K129 and K137. The tract at residues 134-150 (QQQKTARSNIDNMFESY) is linker 1. The tract at residues 151 to 242 (INNLRRQLET…QLYEEEIREM (92 aa)) is coil 1B. A Glycyl lysine isopeptide (Lys-Gly) (interchain with G-Cter in SUMO1); alternate cross-link involves residue K204. K204 is covalently cross-linked (Glycyl lysine isopeptide (Lys-Gly) (interchain with G-Cter in SUMO2); alternate). An N6-acetyllysine modification is found at K214. Y235 carries the post-translational modification Phosphotyrosine. The interval 243–266 (QSQISDTSVVLEMDNNRNLDLDGI) is linker 12. The segment at 267-405 (IAEVKAQYEE…ATYRKLLEGE (139 aa)) is coil 2. The segment at 268-389 (AEVKAQYEEI…EYQELMNVKL (122 aa)) is necessary for interaction with PNN. K271 participates in a covalent cross-link: Glycyl lysine isopeptide (Lys-Gly) (interchain with G-Cter in SUMO2). Residue S281 is modified to Phosphoserine. A Glycyl lysine isopeptide (Lys-Gly) (interchain with G-Cter in SUMO2) cross-link involves residue K292. A Glycyl lysine isopeptide (Lys-Gly) (interchain with G-Cter in SUMO2); alternate cross-link involves residue K302. N6-acetyllysine; alternate is present on K302. K311 is covalently cross-linked (Glycyl lysine isopeptide (Lys-Gly) (interchain with G-Cter in SUMO2)). K332 participates in a covalent cross-link: Glycyl lysine isopeptide (Lys-Gly) (interchain with G-Cter in SUMO2); alternate. K332 is modified (N6-acetyllysine; alternate). Position 337 is a phosphoserine (S337). K400 is covalently cross-linked (Glycyl lysine isopeptide (Lys-Gly) (interchain with G-Cter in SUMO2)). The tract at residues 406–478 (ESRLESGMQN…VSESSDVLSK (73 aa)) is tail. Phosphoserine occurs at positions 407, 411, 417, 424, and 433. A Glycyl lysine isopeptide (Lys-Gly) (interchain with G-Cter in SUMO1); alternate cross-link involves residue K467. K467 is covalently cross-linked (Glycyl lysine isopeptide (Lys-Gly) (interchain with G-Cter in SUMO2); alternate). Phosphoserine occurs at positions 470, 472, 473, and 477.

The protein belongs to the intermediate filament family. As to quaternary structure, heterotetramer of two type I and two type II keratins. Forms a heterodimer with KRT18. Associates with KRT20. Interacts with PNN. When associated with KRT19, interacts with DMD. Interacts with TCHP. Interacts with APEX1. Interacts with GPER1. Interacts with EPPK1. Interacts with PKP1 and PKP2. O-glycosylated. O-GlcNAcylation at multiple sites increases solubility, and decreases stability by inducing proteasomal degradation. Post-translationally, O-glycosylated (O-GlcNAcylated), in a cell cycle-dependent manner. In terms of tissue distribution, expressed in bladder, liver, exocervix and (in very low amounts) esophagus.

Its subcellular location is the cytoplasm. It localises to the nucleus. It is found in the nucleoplasm. The protein resides in the nucleus matrix. Its function is as follows. Together with KRT19, helps to link the contractile apparatus to dystrophin at the costameres of striated muscle. The chain is Keratin, type II cytoskeletal 8 (KRT8) from Bos taurus (Bovine).